The chain runs to 939 residues: Nonsense-mediated mRNA decay factor SMG8 (939 aa).

Disordered stretches follow at residues 561–600 (KICT…QLSP) and 617–645 (LNES…ADTE). A compositionally biased stretch (acidic residues) spans 567-587 (GEDENEDGETEEADEDTEEKE). Residues 617–629 (LNESQESSEQLSG) are compositionally biased toward low complexity.

Belongs to the SMG8 family.

Involved in nonsense-mediated decay (NMD) of mRNAs containing premature stop codons. Probable component of kinase complex containing nonC and recruited to stalled ribosomes. The polypeptide is Nonsense-mediated mRNA decay factor SMG8 (Drosophila ananassae (Fruit fly)).